Consider the following 328-residue polypeptide: Aspartate carbamoyltransferase catalytic subunit (328 aa).

2 residues coordinate carbamoyl phosphate: R70 and T71. Residue K98 participates in L-aspartate binding. The carbamoyl phosphate site is built by R120, H150, and Q153. L-aspartate-binding residues include R183 and R238. 2 residues coordinate carbamoyl phosphate: G279 and P280.

This sequence belongs to the aspartate/ornithine carbamoyltransferase superfamily. ATCase family. Heterododecamer (2C3:3R2) of six catalytic PyrB chains organized as two trimers (C3), and six regulatory PyrI chains organized as three dimers (R2).

The catalysed reaction is carbamoyl phosphate + L-aspartate = N-carbamoyl-L-aspartate + phosphate + H(+). The protein operates within pyrimidine metabolism; UMP biosynthesis via de novo pathway; (S)-dihydroorotate from bicarbonate: step 2/3. Functionally, catalyzes the condensation of carbamoyl phosphate and aspartate to form carbamoyl aspartate and inorganic phosphate, the committed step in the de novo pyrimidine nucleotide biosynthesis pathway. The chain is Aspartate carbamoyltransferase catalytic subunit from Methylococcus capsulatus (strain ATCC 33009 / NCIMB 11132 / Bath).